The following is a 110-amino-acid chain: Large ribosomal subunit protein uL22 (110 aa).

It belongs to the universal ribosomal protein uL22 family. In terms of assembly, part of the 50S ribosomal subunit.

Its function is as follows. This protein binds specifically to 23S rRNA; its binding is stimulated by other ribosomal proteins, e.g. L4, L17, and L20. It is important during the early stages of 50S assembly. It makes multiple contacts with different domains of the 23S rRNA in the assembled 50S subunit and ribosome. Functionally, the globular domain of the protein is located near the polypeptide exit tunnel on the outside of the subunit, while an extended beta-hairpin is found that lines the wall of the exit tunnel in the center of the 70S ribosome. The polypeptide is Large ribosomal subunit protein uL22 (Vibrio cholerae serotype O1 (strain ATCC 39541 / Classical Ogawa 395 / O395)).